Consider the following 379-residue polypeptide: Flap endonuclease 1 (379 aa).

The tract at residues 1–105 (MGIKGLTKLL…QELAKRYSKR (105 aa)) is N-domain. A Mg(2+)-binding site is contributed by Asp-34. DNA is bound at residue Arg-71. Mg(2+) is bound by residues Asp-87, Glu-159, Glu-161, Asp-180, and Asp-182. The I-domain stretch occupies residues 123–254 (AIEKLSKRTV…QTALKLIRQH (132 aa)). A DNA-binding site is contributed by Glu-159. Residues Gly-232 and Asp-234 each coordinate DNA. Mg(2+) is bound at residue Asp-234. Residues 331 to 379 (AKNKSSQGRLESFFKPTATTSAPLKRKETSDKTSKAAANKKTKAGGKKK) form a disordered region. The interval 336 to 344 (SQGRLESFF) is interaction with PCNA. A compositionally biased stretch (basic and acidic residues) spans 355–364 (KRKETSDKTS). Residues 368–379 (ANKKTKAGGKKK) are compositionally biased toward basic residues.

It belongs to the XPG/RAD2 endonuclease family. FEN1 subfamily. Interacts with PCNA. Three molecules of FEN1 bind to one PCNA trimer with each molecule binding to one PCNA monomer. PCNA stimulates the nuclease activity without altering cleavage specificity. Mg(2+) is required as a cofactor. In terms of processing, phosphorylated. Phosphorylation upon DNA damage induces relocalization to the nuclear plasma.

Its subcellular location is the nucleus. It localises to the nucleolus. The protein localises to the nucleoplasm. It is found in the mitochondrion. Functionally, structure-specific nuclease with 5'-flap endonuclease and 5'-3' exonuclease activities involved in DNA replication and repair. During DNA replication, cleaves the 5'-overhanging flap structure that is generated by displacement synthesis when DNA polymerase encounters the 5'-end of a downstream Okazaki fragment. It enters the flap from the 5'-end and then tracks to cleave the flap base, leaving a nick for ligation. Also involved in the long patch base excision repair (LP-BER) pathway, by cleaving within the apurinic/apyrimidinic (AP) site-terminated flap. Acts as a genome stabilization factor that prevents flaps from equilibrating into structures that lead to duplications and deletions. Also possesses 5'-3' exonuclease activity on nicked or gapped double-stranded DNA, and exhibits RNase H activity. Also involved in replication and repair of rDNA and in repairing mitochondrial DNA. The sequence is that of Flap endonuclease 1 from Zea mays (Maize).